We begin with the raw amino-acid sequence, 1221 residues long: DNA replication helicase (1221 aa).

A Nuclear localization signal motif is present at residues 692-701 (PKCKCYKKIK). An ATP-binding site is contributed by 917–924 (GEPGSGKS). Residues 967–981 (INELKQCSESYFKKH) constitute a DNA-binding region (H-T-H motif).

As to quaternary structure, interacts with IE1 and LEF-3.

The protein localises to the host nucleus. The enzyme catalyses ATP + H2O = ADP + phosphate + H(+). In terms of biological role, essential for initiation of viral DNA replication, it may contribute to other functions such as controlling the switch to the late phase and leading to the inhibition of host protein synthesis. Required for late and very late gene expression. This Lepidoptera (butterflies and moths) protein is DNA replication helicase (HELI).